A 135-amino-acid polypeptide reads, in one-letter code: HTH-type transcriptional regulator CueR (135 aa).

In terms of domain architecture, HTH merR-type spans 1 to 69 (MNISDVAKIT…LEESGELVNL (69 aa)). Positions 4–23 (SDVAKITGLTSKAIRFYEEK) form a DNA-binding region, H-T-H motif. Positions 112 and 120 each coordinate Cu(+).

In terms of assembly, homodimer.

The protein localises to the cytoplasm. Functionally, regulates the transcription of the copA and cueO genes. It detects cytoplasmic copper stress and activates transcription in response to increasing copper concentrations. This chain is HTH-type transcriptional regulator CueR (cueR), found in Escherichia coli O6:H1 (strain CFT073 / ATCC 700928 / UPEC).